The chain runs to 250 residues: Phosphoribosylaminoimidazole-succinocarboxamide synthase (250 aa).

It belongs to the SAICAR synthetase family.

It carries out the reaction 5-amino-1-(5-phospho-D-ribosyl)imidazole-4-carboxylate + L-aspartate + ATP = (2S)-2-[5-amino-1-(5-phospho-beta-D-ribosyl)imidazole-4-carboxamido]succinate + ADP + phosphate + 2 H(+). It participates in purine metabolism; IMP biosynthesis via de novo pathway; 5-amino-1-(5-phospho-D-ribosyl)imidazole-4-carboxamide from 5-amino-1-(5-phospho-D-ribosyl)imidazole-4-carboxylate: step 1/2. The sequence is that of Phosphoribosylaminoimidazole-succinocarboxamide synthase from Bifidobacterium longum subsp. infantis (strain ATCC 15697 / DSM 20088 / JCM 1222 / NCTC 11817 / S12).